A 489-amino-acid polypeptide reads, in one-letter code: 3-octaprenyl-4-hydroxybenzoate carboxy-lyase (489 aa).

Position 172 (asparagine 172) interacts with Mn(2+). Prenylated FMN contacts are provided by residues 175 to 177 (VYR), 189 to 191 (RWL), and 194 to 195 (RG). Glutamate 240 is a binding site for Mn(2+). Aspartate 288 acts as the Proton donor in catalysis.

This sequence belongs to the UbiD family. As to quaternary structure, homohexamer. Prenylated FMN serves as cofactor. Mn(2+) is required as a cofactor.

It localises to the cell membrane. The enzyme catalyses a 4-hydroxy-3-(all-trans-polyprenyl)benzoate + H(+) = a 2-(all-trans-polyprenyl)phenol + CO2. Its pathway is cofactor biosynthesis; ubiquinone biosynthesis. Functionally, catalyzes the decarboxylation of 3-octaprenyl-4-hydroxy benzoate to 2-octaprenylphenol, an intermediate step in ubiquinone biosynthesis. This chain is 3-octaprenyl-4-hydroxybenzoate carboxy-lyase, found in Wigglesworthia glossinidia brevipalpis.